A 212-amino-acid chain; its full sequence is Adenylate kinase (212 aa).

10–15 (GAGKGT) provides a ligand contact to ATP. The tract at residues 30–59 (ALGDIFRTIIKTSTSEAELINNYVKQGELV) is NMP. Residues Arg36, 57–59 (ELV), 85–88 (GYPR), and Gln92 each bind AMP. The segment at 122-160 (GRYSCKNCRKIYNSYFLQPKTDNVCDVCGSSTFDYRKDD) is LID. Residue Arg123 coordinates ATP. Zn(2+) is bound by residues Cys126 and Cys129. ATP is bound at residue 132–133 (IY). Zn(2+) contacts are provided by Cys146 and Cys149. Arg157 and Arg168 together coordinate AMP. Lys196 contacts ATP.

Belongs to the adenylate kinase family. In terms of assembly, monomer.

It is found in the cytoplasm. The catalysed reaction is AMP + ATP = 2 ADP. It functions in the pathway purine metabolism; AMP biosynthesis via salvage pathway; AMP from ADP: step 1/1. Its function is as follows. Catalyzes the reversible transfer of the terminal phosphate group between ATP and AMP. Plays an important role in cellular energy homeostasis and in adenine nucleotide metabolism. This chain is Adenylate kinase, found in Rickettsia akari (strain Hartford).